The following is a 269-amino-acid chain: Phosphatidylglycerol--prolipoprotein diacylglyceryl transferase (269 aa).

The next 7 helical transmembrane spans lie at 17 to 37 (LKIH…WLLA), 56 to 76 (LVFW…VLFY), 92 to 112 (WKGG…ALWF), 120 to 140 (FFEL…AGRI), 174 to 194 (PSQL…LWLY), 202 to 222 (MAVS…VEFV), and 237 to 257 (LTMG…LIWL). Arg-139 contacts a 1,2-diacyl-sn-glycero-3-phospho-(1'-sn-glycerol).

This sequence belongs to the Lgt family.

The protein resides in the cell inner membrane. It catalyses the reaction L-cysteinyl-[prolipoprotein] + a 1,2-diacyl-sn-glycero-3-phospho-(1'-sn-glycerol) = an S-1,2-diacyl-sn-glyceryl-L-cysteinyl-[prolipoprotein] + sn-glycerol 1-phosphate + H(+). Its pathway is protein modification; lipoprotein biosynthesis (diacylglyceryl transfer). Functionally, catalyzes the transfer of the diacylglyceryl group from phosphatidylglycerol to the sulfhydryl group of the N-terminal cysteine of a prolipoprotein, the first step in the formation of mature lipoproteins. The sequence is that of Phosphatidylglycerol--prolipoprotein diacylglyceryl transferase from Pseudomonas putida (strain W619).